Reading from the N-terminus, the 324-residue chain is AT-hook motif nuclear-localized protein 24 (324 aa).

Over residues 1 to 12 (MDPVQSHGSQSS) the composition is skewed to polar residues. 2 disordered regions span residues 1-122 (MDPV…KPPI) and 262-324 (MQTP…RPPY). Residues 24–33 (LHLQQQQQEF) are compositionally biased toward low complexity. Residues 69–79 (NIDNIANNSGS) show a composition bias toward polar residues. A compositionally biased stretch (gly residues) spans 88–99 (GGSGEGGGGSGG). Positions 105-117 (RRPRGRPAGSKNK) form a DNA-binding region, a.T hook. The region spanning 129-268 (ANALRTHVME…EDEMQTPVHG (140 aa)) is the PPC domain. Residues 280–297 (MMGQQLQHQQQAMSGHQG) show a composition bias toward low complexity. Residues 304-318 (GSVQLQQQHDQSYWS) are compositionally biased toward polar residues.

It localises to the nucleus. In terms of biological role, transcription factor that specifically binds AT-rich DNA sequences related to the nuclear matrix attachment regions (MARs). The polypeptide is AT-hook motif nuclear-localized protein 24 (Arabidopsis thaliana (Mouse-ear cress)).